Consider the following 308-residue polypeptide: Putative S-adenosyl-L-methionine-dependent methyltransferase Mb3816c (308 aa).

Residues Asp-131 and 160-161 (DL) contribute to the S-adenosyl-L-methionine site.

This sequence belongs to the UPF0677 family.

Its function is as follows. Exhibits S-adenosyl-L-methionine-dependent methyltransferase activity. The protein is Putative S-adenosyl-L-methionine-dependent methyltransferase Mb3816c of Mycobacterium bovis (strain ATCC BAA-935 / AF2122/97).